A 159-amino-acid polypeptide reads, in one-letter code: Ribosomal RNA large subunit methyltransferase H (159 aa).

S-adenosyl-L-methionine contacts are provided by residues Leu-76, Gly-108, and 127-132; that span reads FGRLTL.

It belongs to the RNA methyltransferase RlmH family. In terms of assembly, homodimer.

It is found in the cytoplasm. The enzyme catalyses pseudouridine(1915) in 23S rRNA + S-adenosyl-L-methionine = N(3)-methylpseudouridine(1915) in 23S rRNA + S-adenosyl-L-homocysteine + H(+). Specifically methylates the pseudouridine at position 1915 (m3Psi1915) in 23S rRNA. This is Ribosomal RNA large subunit methyltransferase H from Streptococcus pneumoniae (strain 70585).